A 116-amino-acid chain; its full sequence is Ribosome-binding factor A (116 aa).

Belongs to the RbfA family. Monomer. Binds 30S ribosomal subunits, but not 50S ribosomal subunits or 70S ribosomes.

The protein resides in the cytoplasm. Its function is as follows. One of several proteins that assist in the late maturation steps of the functional core of the 30S ribosomal subunit. Associates with free 30S ribosomal subunits (but not with 30S subunits that are part of 70S ribosomes or polysomes). Required for efficient processing of 16S rRNA. May interact with the 5'-terminal helix region of 16S rRNA. This is Ribosome-binding factor A from Streptococcus pneumoniae serotype 4 (strain ATCC BAA-334 / TIGR4).